A 360-amino-acid chain; its full sequence is POU domain, class 5, transcription factor 1 (360 aa).

Disordered regions lie at residues 1-48 (MAGH…SGIG) and 86-137 (PPGG…EESQ). Positions 4-12 (HLASDFAFS) match the 9aaTAD motif. Position 111 is a phosphoserine; by MAPK (serine 111). A Glycyl lysine isopeptide (Lys-Gly) (interchain with G-Cter in SUMO) cross-link involves residue lysine 123. Residues 123–137 (KLDKEKLEPNPEESQ) show a composition bias toward basic and acidic residues. A POU-specific domain is found at 138–212 (DIKALQKDLE…LLQKWVEEAD (75 aa)). DNA contacts are provided by arginine 157 and glutamine 164. DNA-binding stretches follow at residues 180-186 (SQTTICR) and 193-196 (SFKN). Positions 230-289 (RKRKRTSIENRVRGNLESMFLQCPKPTLQQISHIAQQLGLEKDVVRVWFCNRRQKGKRSS) form a DNA-binding region, homeobox. Position 235 is a phosphothreonine (threonine 235). Residues serine 236, serine 289, serine 290, and serine 355 each carry the phosphoserine modification. A disordered region spans residues 287–322 (RSSSDYSQREDFEAAGSPFTGGPVSSPLAPGPHFGT).

It belongs to the POU transcription factor family. Class-5 subfamily. As to quaternary structure, interacts with PKM. Interacts with WWP2. Interacts with UBE2I and ZSCAN10. Interacts with PCGF1. Interacts with ESRRB; recruits ESRRB near the POU5F1-SOX2 element in the NANOG proximal promoter; the interaction is DNA independent. Interacts with MAPK8 and MAPK9; the interaction allows MAPK8 and MAPK9 to phosphorylate POU5F1 on Ser-355. Interacts (when phosphorylated on Ser-355) with FBXW8. Interacts with FBXW4. Interacts with SOX2 and SOX15; binds synergistically with either SOX2 or SOX15 to DNA. Interacts with DDX56. In terms of processing, sumoylation enhances the protein stability, DNA binding and transactivation activity. Sumoylation is required for enhanced YES1 expression. Ubiquitinated; undergoes 'Lys-63'-linked polyubiquitination by WWP2 leading to proteasomal degradation. Post-translationally, ERK1/2-mediated phosphorylation at Ser-111 promotes nuclear exclusion and proteasomal degradation. Phosphorylation at Thr-235 and Ser-236 decrease DNA-binding and alters ability to activate transcription. Expressed in immature oocytes.

It localises to the cytoplasm. The protein localises to the nucleus. Its function is as follows. Transcription factor that binds to the octamer motif (5'-ATTTGCAT-3'). Forms a trimeric complex with SOX2 or SOX15 on DNA and controls the expression of a number of genes involved in embryonic development such as YES1, FGF4, UTF1 and ZFP206. Critical for early embryogenesis and for embryonic stem cell pluripotency. The chain is POU domain, class 5, transcription factor 1 (POU5F1) from Bos taurus (Bovine).